The primary structure comprises 207 residues: Thymidylate kinase (207 aa).

An ATP-binding site is contributed by 10–17 (GIEGSGKS).

The protein belongs to the thymidylate kinase family.

The catalysed reaction is dTMP + ATP = dTDP + ADP. In terms of biological role, phosphorylation of dTMP to form dTDP in both de novo and salvage pathways of dTTP synthesis. The chain is Thymidylate kinase from Halothermothrix orenii (strain H 168 / OCM 544 / DSM 9562).